The primary structure comprises 138 residues: MPWRTALKVALAAGEAVTKALTRAVRDEIRQTQQAAARHAAATGQSPSETKENANANAKLGISLEESLQILNVKTPLNREDVEKHYEHLFAINDKAKGGTFYLQSKVYRAKERIDEELSRLEQKSEENKEQQKENSKE.

A compositionally biased stretch (low complexity) spans 32–43 (TQQAAARHAAAT). 2 disordered regions span residues 32-58 (TQQA…NANA) and 118-138 (LSRL…NSKE). The span at 44–56 (GQSPSETKENANA) shows a compositional bias: polar residues. The segment at 66-119 (ESLQILNVKTPLNREDVEKHYEHLFAINDKAKGGTFYLQSKVYRAKERIDEELS) is J-like.

This sequence belongs to the TIM16/PAM16 family. In terms of assembly, probable component of the PAM complex at least composed of a mitochondrial HSP70 protein, GrpE, tim-44, tim-16 and tim-14. Associates with the TIM23 complex.

The protein resides in the mitochondrion inner membrane. Its function is as follows. Regulates ATP-dependent protein translocation into the mitochondrial matrix. This chain is Mitochondrial import inner membrane translocase subunit tim-16, found in Caenorhabditis briggsae.